The chain runs to 101 residues: Small ribosomal subunit protein uS14 (101 aa).

This sequence belongs to the universal ribosomal protein uS14 family. In terms of assembly, part of the 30S ribosomal subunit. Contacts proteins S3 and S10.

Its function is as follows. Binds 16S rRNA, required for the assembly of 30S particles and may also be responsible for determining the conformation of the 16S rRNA at the A site. The chain is Small ribosomal subunit protein uS14 from Bartonella quintana (strain Toulouse) (Rochalimaea quintana).